Reading from the N-terminus, the 394-residue chain is Cytochrome b (394 aa).

Helical transmembrane passes span 39–59 (FGSLAGICLVIQIVTGVFLAM), 83–105 (WLLRYMHANGASMFFIVVYLHTF), 120–140 (VWCLGVVIFLLMIVTAFIGYV), and 186–206 (FFSLYHLLPFILVGASLLHLA). Heme b-binding residues include H89 and H103. 2 residues coordinate heme b: H191 and H204. Residue H209 coordinates a ubiquinone. Helical transmembrane passes span 232–252 (FYVKDLVGWVAFAIFFSIWIF), 296–316 (AGGVAAIALVFICLLALPFFK), 328–348 (IYQGIFWLLLADCLLLGWIGC), and 355–374 (FVTIGQISSIVFFLFFAITP).

It belongs to the cytochrome b family. In terms of assembly, the main subunits of complex b-c1 are: cytochrome b, cytochrome c1 and the Rieske protein. It depends on heme b as a cofactor.

The protein localises to the mitochondrion inner membrane. Functionally, component of the ubiquinol-cytochrome c reductase complex (complex III or cytochrome b-c1 complex) that is part of the mitochondrial respiratory chain. The b-c1 complex mediates electron transfer from ubiquinol to cytochrome c. Contributes to the generation of a proton gradient across the mitochondrial membrane that is then used for ATP synthesis. The protein is Cytochrome b (MT-CYB) of Oenothera berteroana (Bertero's evening primrose).